A 556-amino-acid chain; its full sequence is MKTDIEIAQSVALKPIAEIVEQVGIGFDDIELYGKYKAKLSFDKIEAVKSQKVGKLILVTAINPTPAGEGKSTMSIGLADALNKIGKKTMIALREPSLGPVMGIKGGAAGGGYAQVLPMEDINLHFTGDMHAITTANNALSALLDNHIHQGNELDIDQRRVIWKRVVDLNDRALRQVIVGLGSPVNGIPREDGFDITVASEIMAILCLATDLSDLKKRLSNIVVAYSRNRKPIYVKDLKIEGALTLILKDTIKPNLVQTIYGTPALVHGGPFANIAHGCNSVLATSTALRLADYVVTEAGFGADLGAEKFLDIKTPNLPTSPDAIVIVATLRALKMHGGVSKEDLSQENVEAVKRGFTNLERHVNNMRQYGVPVVVAINQFTADTESEIATLKTLCSNIDVAVELASVWEDGADGGLELAQTVANVIETQSSNYKRLYNDEDTIEEKIKKIVTKIYGGNKVHFGPKAQIQLKEFSDNGWDKMPICMAKTQYSFSDNPNLLGAPTDFDITVREFVPKTGAGFIVALTGDVLTMPGLPKKPAALNMDVLEDGTAIGLF.

Position 65–72 (65–72 (TPAGEGKS)) interacts with ATP.

This sequence belongs to the formate--tetrahydrofolate ligase family.

It carries out the reaction (6S)-5,6,7,8-tetrahydrofolate + formate + ATP = (6R)-10-formyltetrahydrofolate + ADP + phosphate. It functions in the pathway one-carbon metabolism; tetrahydrofolate interconversion. This is Formate--tetrahydrofolate ligase from Streptococcus agalactiae serotype V (strain ATCC BAA-611 / 2603 V/R).